The following is a 394-amino-acid chain: NAD(P)H-quinone oxidoreductase subunit H (394 aa).

Belongs to the complex I 49 kDa subunit family. NDH-1 can be composed of about 15 different subunits; different subcomplexes with different compositions have been identified which probably have different functions.

The protein localises to the cellular thylakoid membrane. The catalysed reaction is a plastoquinone + NADH + (n+1) H(+)(in) = a plastoquinol + NAD(+) + n H(+)(out). It carries out the reaction a plastoquinone + NADPH + (n+1) H(+)(in) = a plastoquinol + NADP(+) + n H(+)(out). Functionally, NDH-1 shuttles electrons from an unknown electron donor, via FMN and iron-sulfur (Fe-S) centers, to quinones in the respiratory and/or the photosynthetic chain. The immediate electron acceptor for the enzyme in this species is believed to be plastoquinone. Couples the redox reaction to proton translocation, and thus conserves the redox energy in a proton gradient. Cyanobacterial NDH-1 also plays a role in inorganic carbon-concentration. This chain is NAD(P)H-quinone oxidoreductase subunit H, found in Prochlorococcus marinus (strain NATL2A).